A 188-amino-acid chain; its full sequence is Probable nicotinate-nucleotide adenylyltransferase (188 aa).

The protein belongs to the NadD family.

It catalyses the reaction nicotinate beta-D-ribonucleotide + ATP + H(+) = deamido-NAD(+) + diphosphate. It functions in the pathway cofactor biosynthesis; NAD(+) biosynthesis; deamido-NAD(+) from nicotinate D-ribonucleotide: step 1/1. Functionally, catalyzes the reversible adenylation of nicotinate mononucleotide (NaMN) to nicotinic acid adenine dinucleotide (NaAD). This is Probable nicotinate-nucleotide adenylyltransferase from Listeria monocytogenes serovar 1/2a (strain ATCC BAA-679 / EGD-e).